The primary structure comprises 110 residues: Cyclin-dependent protein kinase inhibitor SMR8 (110 aa).

In terms of assembly, interacts with CDKA-1 and D-type cyclins. Expressed in the root vascular tissue.

Its function is as follows. Probable cyclin-dependent protein kinase (CDK) inhibitor that functions as a repressor of mitosis in the endoreduplication cell cycle. This is Cyclin-dependent protein kinase inhibitor SMR8 from Arabidopsis thaliana (Mouse-ear cress).